The following is a 569-amino-acid chain: MKQSFFLVPTMREVPADADVVSHQLMLRAGMIRQVAAGIYTYLPLARRVIRKIESIVREELDQTGAQEITMPTLHPAELWQESGRWEKYGDELMRLTDRHNRQFALGPTHEEVITSLIRDSINSYKKLPLNVYQIQSKFRDERRPRFGLLRGREFIMKDAYSFHTGGESLDEMYKVMYDAYSRIFRRAGLNVRPVIADSGAIGGKDTHEFMALADVGEDTIAYSDQSDYAANIEMAAVKVNYTRPDEPLLERELVDTGDAKTIRAVAERLSVQEEKIIKSLLVSIDDEWALILLRGDHELNDIKLKHALGASDIRLATEEEVLEVIGTEVGTIGPVDVKGVKVIADHGIKSIVNGVCGANESNKHFIHVNEERDFTVDTYADLRFIQEGDPSPDGKGTIRFAQGIEVGQVFKLGTVYSEKLGATFLDENGKSQPMLMGCYGIGVSRMVAAVIEQHHDEDGIVWPTSVAPFDVHVLALNVKKEEQMKLADSVYHSLQQAGLDVLLDDRPERAGVKFKDADLIGLPLRVAVGKRADEGYVEVKVRKTGEVIEVHADELVPTIQAKLQQLAE.

This sequence belongs to the class-II aminoacyl-tRNA synthetase family. ProS type 1 subfamily. Homodimer.

The protein localises to the cytoplasm. It carries out the reaction tRNA(Pro) + L-proline + ATP = L-prolyl-tRNA(Pro) + AMP + diphosphate. Its function is as follows. Catalyzes the attachment of proline to tRNA(Pro) in a two-step reaction: proline is first activated by ATP to form Pro-AMP and then transferred to the acceptor end of tRNA(Pro). As ProRS can inadvertently accommodate and process non-cognate amino acids such as alanine and cysteine, to avoid such errors it has two additional distinct editing activities against alanine. One activity is designated as 'pretransfer' editing and involves the tRNA(Pro)-independent hydrolysis of activated Ala-AMP. The other activity is designated 'posttransfer' editing and involves deacylation of mischarged Ala-tRNA(Pro). The misacylated Cys-tRNA(Pro) is not edited by ProRS. This chain is Proline--tRNA ligase, found in Halalkalibacterium halodurans (strain ATCC BAA-125 / DSM 18197 / FERM 7344 / JCM 9153 / C-125) (Bacillus halodurans).